The primary structure comprises 396 residues: Elongation factor Tu (396 aa).

In terms of domain architecture, tr-type G spans 10-206; the sequence is KPHVNVGTIG…ALDTYIPTPE (197 aa). A G1 region spans residues 19–26; sequence GHVDHGKT. GTP is bound at residue 19 to 26; sequence GHVDHGKT. Thr26 lines the Mg(2+) pocket. Positions 60 to 64 are G2; it reads GITIN. The interval 81–84 is G3; sequence DCPG. GTP is bound by residues 81–85 and 136–139; these read DCPGH and NKCD. The segment at 136-139 is G4; sequence NKCD. The interval 174 to 176 is G5; sequence SAK.

Belongs to the TRAFAC class translation factor GTPase superfamily. Classic translation factor GTPase family. EF-Tu/EF-1A subfamily. As to quaternary structure, monomer.

The protein localises to the cytoplasm. The catalysed reaction is GTP + H2O = GDP + phosphate + H(+). Functionally, GTP hydrolase that promotes the GTP-dependent binding of aminoacyl-tRNA to the A-site of ribosomes during protein biosynthesis. This chain is Elongation factor Tu, found in Burkholderia mallei (strain NCTC 10247).